A 64-amino-acid polypeptide reads, in one-letter code: Large ribosomal subunit protein uL29 (64 aa).

The protein belongs to the universal ribosomal protein uL29 family.

This Ralstonia pickettii (strain 12J) protein is Large ribosomal subunit protein uL29.